Consider the following 283-residue polypeptide: Formamidopyrimidine-DNA glycosylase (283 aa).

Proline 2 serves as the catalytic Schiff-base intermediate with DNA. Glutamate 3 functions as the Proton donor in the catalytic mechanism. Lysine 61 functions as the Proton donor; for beta-elimination activity in the catalytic mechanism. DNA contacts are provided by histidine 94, arginine 113, and lysine 159. An FPG-type zinc finger spans residues 245-279 (DAYGREGESCRRCGAVMRREKFMNRSSFYCPKCQP). The active-site Proton donor; for delta-elimination activity is the arginine 269.

This sequence belongs to the FPG family. As to quaternary structure, monomer. It depends on Zn(2+) as a cofactor.

The enzyme catalyses Hydrolysis of DNA containing ring-opened 7-methylguanine residues, releasing 2,6-diamino-4-hydroxy-5-(N-methyl)formamidopyrimidine.. It carries out the reaction 2'-deoxyribonucleotide-(2'-deoxyribose 5'-phosphate)-2'-deoxyribonucleotide-DNA = a 3'-end 2'-deoxyribonucleotide-(2,3-dehydro-2,3-deoxyribose 5'-phosphate)-DNA + a 5'-end 5'-phospho-2'-deoxyribonucleoside-DNA + H(+). Involved in base excision repair of DNA damaged by oxidation or by mutagenic agents. Acts as a DNA glycosylase that recognizes and removes damaged bases. Has a preference for oxidized purines, such as 7,8-dihydro-8-oxoguanine (8-oxoG). Has AP (apurinic/apyrimidinic) lyase activity and introduces nicks in the DNA strand. Cleaves the DNA backbone by beta-delta elimination to generate a single-strand break at the site of the removed base with both 3'- and 5'-phosphates. In Mycobacterium avium (strain 104), this protein is Formamidopyrimidine-DNA glycosylase.